An 878-amino-acid polypeptide reads, in one-letter code: Probable outer membrane protein PmpI (878 aa).

A signal peptide spans 1–24 (MRPDHMNFCCLCAAILSSTAVLFG). Over residues 360 to 371 (SSKESPLPSSLQ) the composition is skewed to low complexity. Residues 360 to 381 (SSKESPLPSSLQASVTSPTPAT) form a disordered region. Over residues 372–381 (ASVTSPTPAT) the composition is skewed to polar residues. The region spanning 602–878 (GGAYLFGTWG…SLDLGTTYRF (277 aa)) is the Autotransporter domain.

This sequence belongs to the PMP outer membrane protein family.

Its subcellular location is the secreted. It localises to the cell wall. The protein resides in the cell outer membrane. This is Probable outer membrane protein PmpI (pmpI) from Chlamydia trachomatis serovar D (strain ATCC VR-885 / DSM 19411 / UW-3/Cx).